A 316-amino-acid polypeptide reads, in one-letter code: Ribosomal RNA small subunit methyltransferase H (316 aa).

S-adenosyl-L-methionine is bound by residues 35 to 37 (GGH), D55, F79, D101, and Q108.

Belongs to the methyltransferase superfamily. RsmH family.

The protein resides in the cytoplasm. The enzyme catalyses cytidine(1402) in 16S rRNA + S-adenosyl-L-methionine = N(4)-methylcytidine(1402) in 16S rRNA + S-adenosyl-L-homocysteine + H(+). Functionally, specifically methylates the N4 position of cytidine in position 1402 (C1402) of 16S rRNA. This chain is Ribosomal RNA small subunit methyltransferase H, found in Vibrio parahaemolyticus serotype O3:K6 (strain RIMD 2210633).